The following is a 630-amino-acid chain: Mitochondrial Rho GTPase 1 (630 aa).

The region spanning M1 to Y168 is the Miro 1 domain. Over M1–Q598 the chain is Cytoplasmic. GTP contacts are provided by residues G10–S17, D57–D61, and N113–E116. 2 consecutive EF-hand domains span residues A184–K219 and K304–L339. Residues D197, N199, D201, E208, D317, D319, D321, and E328 each coordinate Ca(2+). In terms of domain architecture, Miro 2 spans R419 to Y579. Residues G428–T435, E459–T463, and T527–D530 each bind GTP. The chain crosses the membrane as a helical; Anchor for type IV membrane protein span at residues L599 to W619. At K620 to K630 the chain is on the mitochondrial intermembrane side.

Belongs to the mitochondrial Rho GTPase family.

The protein localises to the mitochondrion outer membrane. Its function is as follows. Mitochondrial GTPase involved in mitochondrial trafficking. Probably involved in control of anterograde transport of mitochondria and their subcellular distribution. In Schizosaccharomyces pombe (strain 972 / ATCC 24843) (Fission yeast), this protein is Mitochondrial Rho GTPase 1 (gem1).